A 174-amino-acid chain; its full sequence is Alpha-crystallin B chain (174 aa).

Met1 is subject to N-acetylmethionine. Positions 55–163 constitute a sHSP domain; the sequence is RMPSWLETGL…PERSIPITRE (109 aa). Positions 82, 103, 105, and 110 each coordinate Zn(2+). A disordered region spans residues 148 to 174; that stretch reads RKQSDVPERSIPITREEKPAIAGAQRK. Residues 149-166 show a composition bias toward basic and acidic residues; that stretch reads KQSDVPERSIPITREEKP.

Belongs to the small heat shock protein (HSP20) family. Heteromer composed of three CRYAA and one CRYAB subunits. Aggregates with homologous proteins, including the small heat shock protein HSPB1, to form large heteromeric complexes. Inter-subunit bridging via zinc ions enhances stability, which is crucial as there is no protein turn over in the lens. In terms of tissue distribution, lens as well as other tissues.

May contribute to the transparency and refractive index of the lens. The protein is Alpha-crystallin B chain (CRYAB) of Anas platyrhynchos (Mallard).